Consider the following 260-residue polypeptide: Lys-63-specific deubiquitinase BRCC36 (260 aa).

Residues 6–149 (VHLESDAFLV…YTCFQSVQAQ (144 aa)) enclose the MPN domain. Zn(2+) is bound by residues histidine 92, histidine 94, and aspartate 105. The JAMM motif motif lies at 92–105 (HSHPHITVWPSHVD).

The protein belongs to the peptidase M67A family. BRCC36 subfamily. As to quaternary structure, component of the BRCA1-A complex, at least composed of brca1, bard1, uimc1/rap80, abraxas1, brcc3/brcc36, babam2 and babam1/nba1. In the BRCA1-A complex, interacts directly with abraxas1 and babam2. Component of the BRISC complex, at least composed of abraxas2, brcc3/brcc36, babam2 and babam1/nba1. Within the complex, interacts directly with abraxas2. Both the BRCA1-A complex and the BRISC complex bind polyubiquitin. The cofactor is Zn(2+).

Its subcellular location is the nucleus. The protein resides in the cytoplasm. It localises to the cytoskeleton. It is found in the spindle pole. Its function is as follows. Metalloprotease that specifically cleaves 'Lys-63'-linked polyubiquitin chains. Does not have activity toward 'Lys-48'-linked polyubiquitin chains. Component of the BRCA1-A complex, a complex that specifically recognizes 'Lys-63'-linked ubiquitinated histones H2A and H2AX at DNA lesions sites, leading to target the brca1-bard1 heterodimer to sites of DNA damage at double-strand breaks (DSBs). In the BRCA1-A complex, it specifically removes 'Lys-63'-linked ubiquitin on histones H2A and H2AX, antagonizing the rnf8-dependent ubiquitination at double-strand breaks (DSBs). Catalytic subunit of the BRISC complex, a multiprotein complex that specifically cleaves 'Lys-63'-linked ubiquitin in various substrates. Mediates the specific 'Lys-63'-specific deubiquitination associated with the COP9 signalosome complex (CSN), via the interaction of the BRISC complex with the CSN complex. The BRISC complex is required for normal mitotic spindle assembly and microtubule attachment to kinetochores via its role in deubiquitinating numa1. Plays a role in interferon signaling via its role in the deubiquitination of the interferon receptor ifnar1; deubiquitination increases ifnar1 activity by enhancing its stability and cell surface expression. Acts as a regulator of the NLRP3 inflammasome by mediating deubiquitination of nlrp3. Down-regulates the response to bacterial lipopolysaccharide (LPS) via its role in ifnar1 deubiquitination. The protein is Lys-63-specific deubiquitinase BRCC36 (brcc3) of Salmo salar (Atlantic salmon).